A 798-amino-acid polypeptide reads, in one-letter code: Interphotoreceptor matrix proteoglycan 1 (798 aa).

A signal peptide spans 1 to 20; it reads MNLEIKHAILVLWIFLQVQG. An N-linked (GlcNAc...) asparagine glycan is attached at Asn-142. The SEA 1 domain occupies 238-360; that stretch reads SEEKVEFSIS…PEAYLTAADL (123 aa). Residues Thr-442 and Thr-445 are each glycosylated (O-linked (GalNAc...) threonine). In terms of domain architecture, SEA 2 spans 574 to 687; the sequence is HELVVFFSLR…YSLDIEPADQ (114 aa). 2 N-linked (GlcNAc...) asparagine glycosylation sites follow: Asn-595 and Asn-619. Residues 624–632 carry the Heparin- and hyaluronan-binding motif; it reads KQLEILSFR. Residues Asn-633 and Asn-651 are each glycosylated (N-linked (GlcNAc...) asparagine). Positions 741-798 are disordered; that stretch reads ASQGQATPCRPPDHSTNQARQPSVKKLQRQQNKVVKKRNSELSATDFEELDDQDWEGN. The span at 786 to 798 shows a compositional bias: acidic residues; the sequence is DFEELDDQDWEGN.

Post-translationally, highly glycosylated (N- and O-linked carbohydrates and sialic acid).

It is found in the cell projection. The protein localises to the cilium. The protein resides in the photoreceptor outer segment. Its subcellular location is the secreted. It localises to the extracellular space. It is found in the extracellular matrix. The protein localises to the interphotoreceptor matrix. The protein resides in the photoreceptor inner segment. Its function is as follows. Chondroitin sulfate-, heparin- and hyaluronan-binding protein. May serve to form a basic macromolecular scaffold comprising the insoluble interphotoreceptor matrix. This is Interphotoreceptor matrix proteoglycan 1 from Rattus norvegicus (Rat).